A 727-amino-acid polypeptide reads, in one-letter code: Glycerol-3-phosphate dehydrogenase, mitochondrial (727 aa).

The N-terminal 42 residues, 1 to 42, are a transit peptide targeting the mitochondrion; it reads MAFQKAVKGTILVGGGALATVLGLSHFAHYKRKQVNLAFVEA. Residue 71 to 99 participates in FAD binding; sequence DVLVIGGGATGSGCALDAVTRGLKTALVE. Residue Tyr-601 is modified to Phosphotyrosine. 2 consecutive EF-hand domains span residues 623–658 and 659–694; these read SDIDRYKKRFHKFDADQKGFITIVDVQRVLESIGVQ and MDENTLHEILNEVDLNKNGQVELNEFLQLMSAIQKG. Residues Asp-672, Asn-674, Asn-676, Gln-678, and Glu-683 each coordinate Ca(2+).

Belongs to the FAD-dependent glycerol-3-phosphate dehydrogenase family. FAD serves as cofactor.

The protein resides in the mitochondrion. The enzyme catalyses a quinone + sn-glycerol 3-phosphate = dihydroxyacetone phosphate + a quinol. It functions in the pathway polyol metabolism; glycerol degradation via glycerol kinase pathway; glycerone phosphate from sn-glycerol 3-phosphate (aerobic route): step 1/1. With respect to regulation, calcium-binding enhance the activity of the enzyme. In terms of biological role, calcium-responsive mitochondrial glycerol-3-phosphate dehydrogenase which seems to be a key component of the pancreatic beta-cell glucose-sensing device. This is Glycerol-3-phosphate dehydrogenase, mitochondrial (GPD2) from Bos taurus (Bovine).